The following is a 686-amino-acid chain: Translation initiation factor IF-2 (686 aa).

Residues 61-98 (FEVEEKVVRSKKNSNKKKKKGKGNEDKRQENFAGRQQT) form a disordered region. The segment covering 69 to 81 (RSKKNSNKKKKKG) has biased composition (basic residues). The 170-residue stretch at 188–357 (ERPAVVTIMG…LLVSEVEEYK (170 aa)) folds into the tr-type G domain. The tract at residues 197 to 204 (GHVDHGKT) is G1. 197 to 204 (GHVDHGKT) is a GTP binding site. Residues 222-226 (GITQH) form a G2 region. Residues 243–246 (DTPG) are G3. GTP-binding positions include 243–247 (DTPGH) and 297–300 (NKMD). Residues 297 to 300 (NKMD) are G4. The interval 333-335 (SAI) is G5.

This sequence belongs to the TRAFAC class translation factor GTPase superfamily. Classic translation factor GTPase family. IF-2 subfamily.

It localises to the cytoplasm. Its function is as follows. One of the essential components for the initiation of protein synthesis. Protects formylmethionyl-tRNA from spontaneous hydrolysis and promotes its binding to the 30S ribosomal subunits. Also involved in the hydrolysis of GTP during the formation of the 70S ribosomal complex. The chain is Translation initiation factor IF-2 from Bacillus cereus (strain B4264).